A 351-amino-acid chain; its full sequence is Ion-translocating oxidoreductase complex subunit D (351 aa).

The next 4 helical transmembrane spans lie at 20–40 (IMLL…YFFG), 44–64 (LIQV…TLSL), 89–109 (LPPL…IIIA), and 123–143 (PAMI…TSWL). FMN phosphoryl threonine is present on T187. Helical transmembrane passes span 215-235 (LSGI…LFLL), 244-264 (IPVS…VIAP), 267-287 (FAPP…FFIA), 301-321 (LIFG…GGYP), and 322-342 (DGVA…DYYT).

The protein belongs to the NqrB/RnfD family. As to quaternary structure, the complex is composed of six subunits: RnfA, RnfB, RnfC, RnfD, RnfE and RnfG. Requires FMN as cofactor.

The protein resides in the cell inner membrane. In terms of biological role, part of a membrane-bound complex that couples electron transfer with translocation of ions across the membrane. This chain is Ion-translocating oxidoreductase complex subunit D, found in Pectobacterium carotovorum subsp. carotovorum (strain PC1).